A 349-amino-acid polypeptide reads, in one-letter code: Core protein VP7 (349 aa).

N-linked (GlcNAc...) asparagine; by host glycosylation is found at Asn-193 and Asn-287.

Belongs to the orbivirus VP7 family. In terms of assembly, homotrimer that assemble in a complex of 260 capsomers on an inner scaffold composed of VP3.

It is found in the virion. Functionally, the VP7 protein is one of the five proteins (with VP1, VP3, VP4, and VP6) which form the inner capsid of the virus. The chain is Core protein VP7 (Segment-7) from Antilocapra americana (Pronghorn).